The following is a 373-amino-acid chain: Probable pectin lyase D (373 aa).

A signal peptide spans 1-24 (MKYAAALTAVAALAARAAAVGVSG). 2 cysteine pairs are disulfide-bonded: Cys-82-Cys-101 and Cys-91-Cys-225. Asn-128 is a glycosylation site (N-linked (GlcNAc...) asparagine). The active site involves Arg-255. Residue Asn-274 is glycosylated (N-linked (GlcNAc...) asparagine). Residues Cys-321 and Cys-329 are joined by a disulfide bond. Asn-348 carries N-linked (GlcNAc...) asparagine glycosylation. A compositionally biased stretch (low complexity) spans 354–366 (LPSADAASTSPAS). Residues 354-373 (LPSADAASTSPASNAGQGNL) are disordered.

This sequence belongs to the polysaccharide lyase 1 family.

Its subcellular location is the secreted. It carries out the reaction Eliminative cleavage of (1-&gt;4)-alpha-D-galacturonan methyl ester to give oligosaccharides with 4-deoxy-6-O-methyl-alpha-D-galact-4-enuronosyl groups at their non-reducing ends.. Pectinolytic enzymes consist of four classes of enzymes: pectin lyase, polygalacturonase, pectin methylesterase and rhamnogalacturonase. Among pectinolytic enzymes, pectin lyase is the most important in depolymerization of pectin, since it cleaves internal glycosidic bonds of highly methylated pectins. This is Probable pectin lyase D (pelD) from Aspergillus niger (strain ATCC MYA-4892 / CBS 513.88 / FGSC A1513).